A 336-amino-acid chain; its full sequence is Galactose/methyl galactoside import permease protein MglC (336 aa).

The next 8 membrane-spanning stretches (helical) occupy residues 17–37, 53–73, 107–127, 128–148, 181–201, 231–251, 257–277, and 306–326; these read AIYFVLLILLGIIIAQDPTFL, LIIALGVAGLLITQGTDLSAG, VVILAVCAIGAVIGLVNGLVI, AYLNVTPFIATMGTMIIIYGF, FKLSYITIYAAIAALLVWIMW, LVAIYMIAGMFYAFGGMLEAG, TNNLGFMYELDAIAACVVGGV, and IGVNPYWQYIIKGSIIILAVA.

This sequence belongs to the binding-protein-dependent transport system permease family. AraH/RbsC subfamily. The complex is composed of one ATP-binding protein (MglA), two transmembrane proteins (MglC) and a solute-binding protein (MglB).

Its subcellular location is the cell inner membrane. Functionally, part of the ABC transporter complex MglABC involved in galactose/methyl galactoside import. Probably responsible for the translocation of the substrate across the membrane. This is Galactose/methyl galactoside import permease protein MglC (mglC) from Haemophilus influenzae (strain ATCC 51907 / DSM 11121 / KW20 / Rd).